Consider the following 820-residue polypeptide: DNA mismatch repair protein MutS (820 aa).

ATP is bound at residue 618-625 (GPNMAGKS).

It belongs to the DNA mismatch repair MutS family.

This protein is involved in the repair of mismatches in DNA. It is possible that it carries out the mismatch recognition step. This protein has a weak ATPase activity. In Chlamydia trachomatis serovar A (strain ATCC VR-571B / DSM 19440 / HAR-13), this protein is DNA mismatch repair protein MutS.